Here is a 239-residue protein sequence, read N- to C-terminus: Bradykinin-potentiating and C-type natriuretic peptides (239 aa).

The signal sequence occupies residues Met1–Gly23. 2 propeptides span residues Lys24 to Gly33 and Leu43 to Ser49. A Pyrrolidone carboxylic acid modification is found at Gln50. The propeptide occupies Val62–Val64. Gln65 carries the pyrrolidone carboxylic acid modification. Residues Leu76 to Ser82 constitute a propeptide that is removed on maturation. Position 83 is a pyrrolidone carboxylic acid (Gln83). A propeptide spanning residues Leu95–Val97 is cleaved from the precursor. The residue at position 98 (Gln98) is a Pyrrolidone carboxylic acid. 2 propeptides span residues Leu109–Asp136 and Gly148–Lys217. Residues Glu132–Gly205 are disordered. Low complexity predominate over residues Ser161–Ser171. The segment covering Pro173–Gln183 has biased composition (basic and acidic residues). Cys223 and Cys239 are oxidised to a cystine.

It in the N-terminal section; belongs to the bradykinin-potentiating peptide family. In the central section; belongs to the bradykinin inhibitor peptide family. This sequence in the C-terminal section; belongs to the natriuretic peptide family. As to expression, expressed by the venom gland.

Its subcellular location is the secreted. Its function is as follows. Bradykinin-potentiating peptides both inhibit the activity of the angiotensin-converting enzyme (ACE) and enhances the action of bradykinin by inhibiting the peptidases that inactivate it. They act as indirect hypotensive agent. Functionally, inhibits angiotensin-converting enzyme (ACE) activity (IC(50)=4.25 uM), preventing the release of angiotensin and thus indirectly contributing to hypotension. In vivo, induce hypotensive response in both normotensive and hypertensive rats. Antagonizes the vasodilatory actions of bradykinin at the B2 bradykinin receptor (BDKRB2). In terms of biological role, has a vasorelaxant activity in rat aortic strips and a diuretic potency in anesthetized rats. May act by activating natriuretic receptors (NPR1 and/or NPR2). The sequence is that of Bradykinin-potentiating and C-type natriuretic peptides from Lachesis muta muta (Bushmaster).